The primary structure comprises 385 residues: tRNA N6-adenosine threonylcarbamoyltransferase (385 aa).

Residues His140, His144, and Tyr161 each contribute to the a divalent metal cation site. Residues 161–165 (YVSGG), Asp193, Gly208, Glu212, and Asn314 each bind substrate. Asp343 is a binding site for a divalent metal cation.

This sequence belongs to the KAE1 / TsaD family. As to quaternary structure, component of the EKC/KEOPS complex composed of at least BUD32, CGI121, GON7, KAE1 and PCC1; the whole complex dimerizes. It depends on a divalent metal cation as a cofactor.

Its subcellular location is the cytoplasm. The protein resides in the nucleus. The catalysed reaction is L-threonylcarbamoyladenylate + adenosine(37) in tRNA = N(6)-L-threonylcarbamoyladenosine(37) in tRNA + AMP + H(+). In terms of biological role, component of the EKC/KEOPS complex that is required for the formation of a threonylcarbamoyl group on adenosine at position 37 (t(6)A37) in tRNAs that read codons beginning with adenine. The complex is probably involved in the transfer of the threonylcarbamoyl moiety of threonylcarbamoyl-AMP (TC-AMP) to the N6 group of A37. KAE1 likely plays a direct catalytic role in this reaction, but requires other protein(s) of the complex to fulfill this activity. The EKC/KEOPS complex also promotes both telomere uncapping and telomere elongation. The complex is required for efficient recruitment of transcriptional coactivators. This Eremothecium gossypii (strain ATCC 10895 / CBS 109.51 / FGSC 9923 / NRRL Y-1056) (Yeast) protein is tRNA N6-adenosine threonylcarbamoyltransferase.